We begin with the raw amino-acid sequence, 360 residues long: Homeobox-leucine zipper protein HOX21 (360 aa).

Disordered regions lie at residues 25 to 75 and 88 to 126; these read QQAA…SSAQ and MLGK…EKKR. Residues 36 to 55 show a composition bias toward basic residues; sequence HHHHHHHGHHHEQQQHHHHL. Pro residues predominate over residues 56–68; it reads GPPPPPPPHPHNP. A compositionally biased stretch (gly residues) spans 97–109; the sequence is GDGGGGGDEVNGG. Residues 121-180 constitute a DNA-binding region (homeobox); that stretch reads AGEKKRRLNVEQVRTLEKNFELGNKLEPERKMQLARALGLQPRQVAIWFQNRRARWKTKQ. Residues 179–223 form a leucine-zipper region; sequence KQLEKDYDALKRQLDAVKAENDALLNHNKKLQAEIVALKGREAAS. Disordered stretches follow at residues 233–278 and 299–328; these read EASC…GGGG and GVDI…GNVQ. Positions 234–246 are enriched in polar residues; sequence ASCSNRSENSSEI.

It belongs to the HD-ZIP homeobox family. Class I subfamily. Expressed in seedlings, roots, stems, leaf blades and panicles.

The protein localises to the nucleus. Probable transcription factor. This Oryza sativa subsp. indica (Rice) protein is Homeobox-leucine zipper protein HOX21 (HOX21).